Reading from the N-terminus, the 366-residue chain is 1-deoxy-D-xylulose 5-phosphate reductoisomerase (366 aa).

The NADPH site is built by T7, G8, S9, I10, G31, N33, and N111. Residue K112 coordinates 1-deoxy-D-xylulose 5-phosphate. Position 113 (E113) interacts with NADPH. Mn(2+) is bound at residue D131. 1-deoxy-D-xylulose 5-phosphate is bound by residues S132, E133, S162, and H185. Residue E133 coordinates Mn(2+). G191 contacts NADPH. S198, N203, K204, and E207 together coordinate 1-deoxy-D-xylulose 5-phosphate. E207 is a Mn(2+) binding site.

It belongs to the DXR family. Requires Mg(2+) as cofactor. Mn(2+) serves as cofactor.

It carries out the reaction 2-C-methyl-D-erythritol 4-phosphate + NADP(+) = 1-deoxy-D-xylulose 5-phosphate + NADPH + H(+). It functions in the pathway isoprenoid biosynthesis; isopentenyl diphosphate biosynthesis via DXP pathway; isopentenyl diphosphate from 1-deoxy-D-xylulose 5-phosphate: step 1/6. In terms of biological role, catalyzes the NADPH-dependent rearrangement and reduction of 1-deoxy-D-xylulose-5-phosphate (DXP) to 2-C-methyl-D-erythritol 4-phosphate (MEP). This chain is 1-deoxy-D-xylulose 5-phosphate reductoisomerase, found in Nautilia profundicola (strain ATCC BAA-1463 / DSM 18972 / AmH).